Consider the following 332-residue polypeptide: MSKVAVFGMGSFGTALANVLAQNGHDVLMWGKNKQSIDEVNQYHSNSRYLNGAQLDKSITATSNLNEAINFSDTYLIALPTKAIREVIKNIDSQLDSKKVFIHVAKGIENATFKRVSEMIEDSLSPEHNGGIGVLSGPSHAEEVVIQQPTTVAASSPDPKVSKLIQDLFMNDYLRVYTNDDLVGVELGGALKNIIAVASGIVAGMGFGDNAKAALMTRGLAEISRLGEELGADPMTFLGLGGIGDLIVTCTSTHSRNYTLGYKIGQGKTVDEALSEMNMVAEGFYTTESVYHLAKQRNIDMPITSALYGVLFKQVPLDESLKLLMGRDKKSE.

NADPH-binding residues include S11, F12, K32, and K106. Residues K106, G137, and S139 each contribute to the sn-glycerol 3-phosphate site. Position 141 (A141) interacts with NADPH. The sn-glycerol 3-phosphate site is built by K192, D245, S255, R256, and N257. K192 (proton acceptor) is an active-site residue. R256 provides a ligand contact to NADPH. Positions 280 and 282 each coordinate NADPH.

It belongs to the NAD-dependent glycerol-3-phosphate dehydrogenase family.

The protein localises to the cytoplasm. The enzyme catalyses sn-glycerol 3-phosphate + NAD(+) = dihydroxyacetone phosphate + NADH + H(+). It carries out the reaction sn-glycerol 3-phosphate + NADP(+) = dihydroxyacetone phosphate + NADPH + H(+). Its pathway is membrane lipid metabolism; glycerophospholipid metabolism. Its function is as follows. Catalyzes the reduction of the glycolytic intermediate dihydroxyacetone phosphate (DHAP) to sn-glycerol 3-phosphate (G3P), the key precursor for phospholipid synthesis. This is Glycerol-3-phosphate dehydrogenase [NAD(P)+] from Staphylococcus carnosus (strain TM300).